The chain runs to 215 residues: Fibroblast growth factor 17 (215 aa).

The N-terminal stretch at 1–22 (MYGINQRYLYISFHFFVVWCHA) is a signal peptide. Residue asparagine 137 is glycosylated (N-linked (GlcNAc...) asparagine).

Belongs to the heparin-binding growth factors family.

The protein resides in the secreted. Involved in dorsal-ventral embryonic patterning, by promoting expression of bone morphogenetic protein (BMP) antagonists such as chd. Also involved in anterior-posterior neural patterning and in mesoderm induction. This Danio rerio (Zebrafish) protein is Fibroblast growth factor 17 (fgf17).